The following is a 294-amino-acid chain: Phosphoprotein (294 aa).

The tract at residues 12–28 (MGNEAAKAAEAFQRSLK) is binding to monomeric RNA-free nucleoprotein. Residues 52-97 (KPTISKSTKVTTPPERRNAWGEKPDTTRNQTEEARNEATLEDTSRL) form a disordered region. Residues 65 to 97 (PERRNAWGEKPDTTRNQTEEARNEATLEDTSRL) are compositionally biased toward basic and acidic residues. Phosphoserine is present on Ser106. The binding to host phosphatase PP1 stretch occupies residues 123-128 (KKKVTF). Residues 135–157 (RYTKLEMEALELLSDNEDDDAES) are binding to protein M2-1. 5 positions are modified to phosphoserine: Ser148, Ser157, Ser158, Ser168, and Ser171. Residues 169–194 (ALSLEARLESIDEKLSMILGLLRTLN) are oligomerization and binding to RNA-directed RNA polymerase L. The interval 234–294 (MKEEAKQKSK…PDDDLYSLTM (61 aa)) is disordered. Positions 251–279 (LTEKAKELNKIVEDESTSGESEEEEEEED) are binding to RNA-directed RNA polymerase L. Over residues 253 to 263 (EKAKELNKIVE) the composition is skewed to basic and acidic residues. Residues 264 to 294 (DESTSGESEEEEEEEDEEESNPDDDLYSLTM) show a composition bias toward acidic residues. The segment at 281–294 (EESNPDDDLYSLTM) is binding to the N-RNA complex.

This sequence belongs to the pneumoviridae phosphoprotein P family. In terms of assembly, homotetramer. Interacts with protein M2-1; the interaction between the two tetramers is required for the anti-termination and elongation transcriptional activities of protein M2-1. Interacts with host phosphatase PP1; this interaction recruits PP1 to the inclusion bodies. Formation of a complex PP1/M2-1/P allows P to target host PP1 phosphatase to the M2-1 substrate. Interacts with the nucleoprotein N; the phosphorylated phosphoprotein P binds to N-RNA complex. Interacts with the monomeric RNA-free nucleoprotein N. Interacts with RNA-directed RNA polymerase L (via N-terminus); the association of P and L forms the polymerase complex. Constitutively phosphorylated by host.

The protein localises to the virion. It is found in the host cytoplasm. Plays critical roles in regulating RNA replication and transcription through its interactions with multiple proteins. Tethers the RNA-directed RNA polymerase L to the nucleoprotein-RNA complex. Recruits the M2-1 protein, a processivity factor that is required for efficient transcription of viral RNA. Acts as a chaperone for neo-synthesized nucleoprotein by forming an N-P complex that preserves N in a monomeric and RNA-free state and prevents the association of nascent N with host cell RNAs. Recruits the host phosphatase PP1 to inclusion bodies to regulate viral transcription. The protein is Phosphoprotein of Avian metapneumovirus (isolate Canada goose/Minnesota/15a/2001) (AMPV).